The primary structure comprises 563 residues: MDTKHLIASEIQKVVPDMEQSTILSLLETPKNSSMGDLAFPAFSLAKTLRKAPQIIASDIAEQIKSDQFEKVEAVGPYVNFFLDKAAISSQVLKQVLSDGSAYATQNIGEGRNVAIDMSSPNIAKPFSIGHLRSTVIGDSLANIFDKIGYHPVKINHLGDWGKQFGMLIVAYKKWGNEEAVRAHPIDELLKLYVRINAEAETDPSVDEEAREWFRKLEANDPEATELWQWFRDESLLEFNRLYDQMNVTFDSYNGEAFYNDKMDEVLELLESKNLLVESKGAQVVNLEKYGIEHPALIKKSDGATLYITRDLAAALYRKRTYDFAKSIYVVGNEQSAHFKQLKAVLKEMDYDWSDDMTHVPFGLVTKGGAKLSTRKGNVILLEPTVAEAINRAASQIEAKNPNLADKDKVAQAVGVGAIKFYDLKTDRTNGYDFDLEAMVSFEGETGPYVQYAHARIQSILRKANFNPSNSDNYSLNDVESWEIIKLIQDFPRIIVRAADNFEPSIIAKFAINLAQCFNKYYAHTRILDEDAEISSRLALCYATATVLKESLRLLGVDAPNEM.

The 'HIGH' region signature appears at 121 to 131; that stretch reads PNIAKPFSIGH.

Belongs to the class-I aminoacyl-tRNA synthetase family. In terms of assembly, monomer.

Its subcellular location is the cytoplasm. The catalysed reaction is tRNA(Arg) + L-arginine + ATP = L-arginyl-tRNA(Arg) + AMP + diphosphate. This is Arginine--tRNA ligase from Streptococcus agalactiae serotype III (strain NEM316).